Here is a 404-residue protein sequence, read N- to C-terminus: Phosphoglycerate kinase (404 aa).

Residues 22–24 (DLN), arginine 37, 60–63 (HLGR), arginine 119, and arginine 156 contribute to the substrate site. ATP is bound by residues lysine 206, glycine 302, glutamate 333, and 359 to 362 (GGDS).

This sequence belongs to the phosphoglycerate kinase family. Monomer.

The protein localises to the cytoplasm. It catalyses the reaction (2R)-3-phosphoglycerate + ATP = (2R)-3-phospho-glyceroyl phosphate + ADP. Its pathway is carbohydrate degradation; glycolysis; pyruvate from D-glyceraldehyde 3-phosphate: step 2/5. The sequence is that of Phosphoglycerate kinase from Clavibacter michiganensis subsp. michiganensis (strain NCPPB 382).